The sequence spans 446 residues: Mitochondrial distribution and morphology protein 12 (446 aa).

In terms of domain architecture, SMP-LTD spans 1-446 (MSIDINWEAA…VYPSFWTFLV (446 aa)). Over residues 75 to 85 (DNEIGDGEVSD) the composition is skewed to acidic residues. Disordered regions lie at residues 75-106 (DNEIGDGEVSDIQDRSPKPRPSSAGNERSAAD), 126-145 (PHDVPIPSKEDPLASRPIRS), and 188-283 (TPLS…RVRE). The segment covering 126–138 (PHDVPIPSKEDPL) has biased composition (basic and acidic residues). A compositionally biased stretch (polar residues) spans 233–246 (TGNSRPSTADTLDS). The segment covering 260–274 (SSDDAHPNVLPRRDN) has biased composition (basic and acidic residues).

The protein belongs to the MDM12 family. Component of the ER-mitochondria encounter structure (ERMES) or MDM complex, composed of MMM1, MDM10, MDM12 and MDM34. An MMM1 homodimer associates with one molecule of MDM12 on each side in a pairwise head-to-tail manner, and the SMP-LTD domains of MMM1 and MDM12 generate a continuous hydrophobic tunnel for phospholipid trafficking.

Its subcellular location is the mitochondrion outer membrane. The protein localises to the endoplasmic reticulum membrane. Its function is as follows. Component of the ERMES/MDM complex, which serves as a molecular tether to connect the endoplasmic reticulum (ER) and mitochondria. Components of this complex are involved in the control of mitochondrial shape and protein biogenesis, and function in nonvesicular lipid trafficking between the ER and mitochondria. MDM12 is required for the interaction of the ER-resident membrane protein MMM1 and the outer mitochondrial membrane-resident beta-barrel protein MDM10. The MDM12-MMM1 subcomplex functions in the major beta-barrel assembly pathway that is responsible for biogenesis of all mitochondrial outer membrane beta-barrel proteins, and acts in a late step after the SAM complex. The MDM10-MDM12-MMM1 subcomplex further acts in the TOM40-specific pathway after the action of the MDM12-MMM1 complex. Essential for establishing and maintaining the structure of mitochondria and maintenance of mtDNA nucleoids. The polypeptide is Mitochondrial distribution and morphology protein 12 (Coccidioides immitis (strain RS) (Valley fever fungus)).